The primary structure comprises 493 residues: NADH-quinone oxidoreductase subunit N 2 (493 aa).

14 consecutive transmembrane segments (helical) span residues Ile-16–Ile-36, Phe-45–Gln-65, Gly-87–Ser-107, Gly-119–Thr-139, Leu-141–Phe-161, Leu-176–Ile-196, Val-219–Phe-239, Leu-258–Leu-278, Trp-285–Ile-305, Leu-313–Asn-333, Ile-340–Ala-360, Ala-385–Leu-405, Gly-421–Val-441, and Cys-464–Leu-484.

It belongs to the complex I subunit 2 family. In terms of assembly, NDH-1 is composed of 14 different subunits. Subunits NuoA, H, J, K, L, M, N constitute the membrane sector of the complex.

Its subcellular location is the cell inner membrane. The enzyme catalyses a quinone + NADH + 5 H(+)(in) = a quinol + NAD(+) + 4 H(+)(out). NDH-1 shuttles electrons from NADH, via FMN and iron-sulfur (Fe-S) centers, to quinones in the respiratory chain. The immediate electron acceptor for the enzyme in this species is believed to be ubiquinone. Couples the redox reaction to proton translocation (for every two electrons transferred, four hydrogen ions are translocated across the cytoplasmic membrane), and thus conserves the redox energy in a proton gradient. This chain is NADH-quinone oxidoreductase subunit N 2, found in Solibacter usitatus (strain Ellin6076).